A 214-amino-acid polypeptide reads, in one-letter code: N-(5'-phosphoribosyl)anthranilate isomerase (214 aa).

Belongs to the TrpF family.

It carries out the reaction N-(5-phospho-beta-D-ribosyl)anthranilate = 1-(2-carboxyphenylamino)-1-deoxy-D-ribulose 5-phosphate. It participates in amino-acid biosynthesis; L-tryptophan biosynthesis; L-tryptophan from chorismate: step 3/5. This is N-(5'-phosphoribosyl)anthranilate isomerase from Rhodospirillum centenum (strain ATCC 51521 / SW).